Consider the following 1095-residue polypeptide: DNA-directed RNA polymerase subunit beta'' (1095 aa).

4 residues coordinate Zn(2+): Cys220, Cys293, Cys300, and Cys303.

This sequence belongs to the RNA polymerase beta' chain family. RpoC2 subfamily. In plastids the minimal PEP RNA polymerase catalytic core is composed of four subunits: alpha, beta, beta', and beta''. When a (nuclear-encoded) sigma factor is associated with the core the holoenzyme is formed, which can initiate transcription. It depends on Zn(2+) as a cofactor.

The protein resides in the plastid. It localises to the chloroplast. The catalysed reaction is RNA(n) + a ribonucleoside 5'-triphosphate = RNA(n+1) + diphosphate. In terms of biological role, DNA-dependent RNA polymerase catalyzes the transcription of DNA into RNA using the four ribonucleoside triphosphates as substrates. The polypeptide is DNA-directed RNA polymerase subunit beta'' (Zygnema circumcarinatum (Green alga)).